The following is a 275-amino-acid chain: Stage 0 sporulation protein YaaT (275 aa).

The PSP1 C-terminal domain maps to 61–146 (RKVIRVADDR…FKTRIELRQI (86 aa)).

The protein localises to the cytoplasm. Essential for the phosphorelay during initiation of sporulation. May control the level of phosphorylated spo0A through spo0E activity during sporulation. The sequence is that of Stage 0 sporulation protein YaaT (yaaT) from Bacillus subtilis (strain 168).